The chain runs to 959 residues: Glycine dehydrogenase (decarboxylating) (959 aa).

The residue at position 708 (lysine 708) is an N6-(pyridoxal phosphate)lysine.

The protein belongs to the GcvP family. As to quaternary structure, the glycine cleavage system is composed of four proteins: P, T, L and H. The cofactor is pyridoxal 5'-phosphate.

It carries out the reaction N(6)-[(R)-lipoyl]-L-lysyl-[glycine-cleavage complex H protein] + glycine + H(+) = N(6)-[(R)-S(8)-aminomethyldihydrolipoyl]-L-lysyl-[glycine-cleavage complex H protein] + CO2. In terms of biological role, the glycine cleavage system catalyzes the degradation of glycine. The P protein binds the alpha-amino group of glycine through its pyridoxal phosphate cofactor; CO(2) is released and the remaining methylamine moiety is then transferred to the lipoamide cofactor of the H protein. This Serratia proteamaculans (strain 568) protein is Glycine dehydrogenase (decarboxylating).